We begin with the raw amino-acid sequence, 509 residues long: Transcription factor SOX-9 (509 aa).

Disordered stretches follow at residues 1–66 (MNLL…ESEE) and 160–271 (RLRV…IDFR). Residues 27–41 (SEGSRGSPCPSGSGS) are compositionally biased toward low complexity. A compositionally biased stretch (polar residues) spans 42 to 52 (DTENTRPQENT). Basic and acidic residues-rich tracts occupy residues 56-66 (GEPDLKKESEE) and 160-174 (RLRV…DYKY). Residues 63-103 (ESEEDKFPVCIREAVSQVLKGYDWTLVPMPVRVNGSSKNKP) form a dimerization (DIM) region. The tract at residues 63-103 (ESEEDKFPVCIREAVSQVLKGYDWTLVPMPVRVNGSSKNKP) is PQA. Serine 64 is modified (phosphoserine). Positions 105–173 (VKRPMNAFMV…QHKKDHPDYK (69 aa)) form a DNA-binding region, HMG box. Serine 211 carries the post-translational modification Phosphoserine. Residues 224–307 (PGEHSGQSQG…LPPNGHPGVP (84 aa)) form a transactivation domain (TAM) region. 2 consecutive short sequence motifs (9aaTAD) follow at residues 275-284 (IGELSSDVIS) and 290-298 (DVNEFDQYL). 2 disordered regions span residues 335 to 415 (WMSK…QHSP) and 420 to 439 (YSPF…TRSQ). Residues 341 to 359 (APPPPPHPPQQPPPVPQAP) are compositionally biased toward pro residues. Residues 360–369 (AQPQAALPQQ) show a composition bias toward low complexity. Over residues 380–415 (HTLTTLSSEPGQSQRTHIKTEQLSPSHYSEQQQHSP) the composition is skewed to polar residues. Residues 394–509 (RTHIKTEQLS…QPVYTQLTRP (116 aa)) form a transactivation domain (TAC) region. Lysine 398 participates in a covalent cross-link: Glycyl lysine isopeptide (Lys-Gly) (interchain with G-Cter in ubiquitin). Positions 460 to 468 (SVLYSTFTY) match the 9aaTAD 3 motif. The segment at 479 to 509 (PIADTSGVPSIPQTHSPQHWEQPVYTQLTRP) is disordered. Residues 485–509 (GVPSIPQTHSPQHWEQPVYTQLTRP) show a composition bias toward polar residues.

As to quaternary structure, homodimer; homodimerization is required for activity. Interacts (via C-terminus) with ZNF219; forming a complex that binds to the COL2A1 promoter and activates COL2A1 expression. Interacts with DDRGK1. Interacts with EP300/p300. Interacts with beta-catenin (CTNNB1); inhibiting CTNNB1 activity by competing with the binding sites of TCF/LEF within CTNNB1. Acetylated; acetylation impairs nuclear localization and ability to transactivate expression of target genes. Deacetylated by SIRT1. In terms of processing, phosphorylation at Ser-64 and Ser-211 by PKA increases transcriptional activity and may help delay chondrocyte maturation downstream of PTHLH/PTHrP signaling. Phosphorylation at either Ser-64 or Ser-211 is required for sumoylation, but phosphorylation is not dependent on sumoylation. Phosphorylated on tyrosine residues; tyrosine dephosphorylation by PTPN11/SHP2 blocks SOX9 phosphorylation by PKA and subsequent SUMOylation. Post-translationally, sumoylated; phosphorylation at either Ser-64 or Ser-211 is required for sumoylation. Sumoylation is induced by BMP signaling pathway. Ubiquitinated; ubiquitination leads to proteasomal degradation and is negatively regulated by DDRGK1.

It is found in the nucleus. Functionally, transcription factor that plays a key role in chondrocytes differentiation and skeletal development. Specifically binds the 5'-ACAAAG-3' DNA motif present in enhancers and super-enhancers and promotes expression of genes important for chondrogenesis, including cartilage matrix protein-coding genes COL2A1, COL4A2, COL9A1, COL11A2 and ACAN, SOX5 and SOX6. Also binds to some promoter regions. Plays a central role in successive steps of chondrocyte differentiation. Absolutely required for precartilaginous condensation, the first step in chondrogenesis during which skeletal progenitors differentiate into prechondrocytes. Together with SOX5 and SOX6, required for overt chondrogenesis when condensed prechondrocytes differentiate into early stage chondrocytes, the second step in chondrogenesis. Later, required to direct hypertrophic maturation and block osteoblast differentiation of growth plate chondrocytes: maintains chondrocyte columnar proliferation, delays prehypertrophy and then prevents osteoblastic differentiation of chondrocytes by lowering beta-catenin (CTNNB1) signaling and RUNX2 expression. Also required for chondrocyte hypertrophy, both indirectly, by keeping the lineage fate of chondrocytes, and directly, by remaining present in upper hypertrophic cells and transactivating COL10A1 along with MEF2C. Low lipid levels are the main nutritional determinant for chondrogenic commitment of skeletal progenitor cells: when lipids levels are low, FOXO (FOXO1 and FOXO3) transcription factors promote expression of SOX9, which induces chondrogenic commitment and suppresses fatty acid oxidation. Mechanistically, helps, but is not required, to remove epigenetic signatures of transcriptional repression and deposit active promoter and enhancer marks at chondrocyte-specific genes. Acts in cooperation with the Hedgehog pathway-dependent GLI (GLI1 and GLI3) transcription factors. In addition to cartilage development, also acts as a regulator of proliferation and differentiation in epithelial stem/progenitor cells: involved in the lung epithelium during branching morphogenesis, by balancing proliferation and differentiation and regulating the extracellular matrix. Controls epithelial branching during kidney development. The polypeptide is Transcription factor SOX-9 (SOX9) (Sus scrofa (Pig)).